The sequence spans 309 residues: MAEITAALVKSLREQTGAGMMDCKKALTETAGDVEAAIDWLRKKGLAAAAKKAGRTASEGLVGIATAGTAGAVVEVNAETDFVARNDTFQGFVETVASLTLAAKGDIEALKSAAYPGGEGRTVEAQVTHLIATIGENMQLRRSAALEVEQGVVTSYMHTAVKPGLGKIGVLVALKSAADPAKLDELGRQIAMHVAAAQPRYAFISEVDAEALDRERSVLSEQAKASGKPDAIIEKMVEGRLRKFYEEVVLTEQIFVIDGETKIAKVLEKAGKDLGAPIELGGFVRFQLGEGIEKEESDFAAEVAAQLKK.

Positions 80-83 (TDFV) are involved in Mg(2+) ion dislocation from EF-Tu.

This sequence belongs to the EF-Ts family.

The protein resides in the cytoplasm. Functionally, associates with the EF-Tu.GDP complex and induces the exchange of GDP to GTP. It remains bound to the aminoacyl-tRNA.EF-Tu.GTP complex up to the GTP hydrolysis stage on the ribosome. The polypeptide is Elongation factor Ts (Rhodospirillum rubrum (strain ATCC 11170 / ATH 1.1.1 / DSM 467 / LMG 4362 / NCIMB 8255 / S1)).